A 156-amino-acid polypeptide reads, in one-letter code: ATP synthase subunit b (156 aa).

The helical transmembrane segment at 7–27 threads the bilayer; sequence LFVQAIVFLILVLFTMKFVWP.

This sequence belongs to the ATPase B chain family. In terms of assembly, F-type ATPases have 2 components, F(1) - the catalytic core - and F(0) - the membrane proton channel. F(1) has five subunits: alpha(3), beta(3), gamma(1), delta(1), epsilon(1). F(0) has three main subunits: a(1), b(2) and c(10-14). The alpha and beta chains form an alternating ring which encloses part of the gamma chain. F(1) is attached to F(0) by a central stalk formed by the gamma and epsilon chains, while a peripheral stalk is formed by the delta and b chains.

Its subcellular location is the cell inner membrane. Its function is as follows. F(1)F(0) ATP synthase produces ATP from ADP in the presence of a proton or sodium gradient. F-type ATPases consist of two structural domains, F(1) containing the extramembraneous catalytic core and F(0) containing the membrane proton channel, linked together by a central stalk and a peripheral stalk. During catalysis, ATP synthesis in the catalytic domain of F(1) is coupled via a rotary mechanism of the central stalk subunits to proton translocation. In terms of biological role, component of the F(0) channel, it forms part of the peripheral stalk, linking F(1) to F(0). This chain is ATP synthase subunit b, found in Paracidovorax citrulli (strain AAC00-1) (Acidovorax citrulli).